The primary structure comprises 172 residues: S-ribosylhomocysteine lyase (172 aa).

Positions 54, 58, and 128 each coordinate Fe cation.

This sequence belongs to the LuxS family. In terms of assembly, homodimer. The cofactor is Fe cation.

The enzyme catalyses S-(5-deoxy-D-ribos-5-yl)-L-homocysteine = (S)-4,5-dihydroxypentane-2,3-dione + L-homocysteine. Involved in the synthesis of autoinducer 2 (AI-2) which is secreted by bacteria and is used to communicate both the cell density and the metabolic potential of the environment. The regulation of gene expression in response to changes in cell density is called quorum sensing. Catalyzes the transformation of S-ribosylhomocysteine (RHC) to homocysteine (HC) and 4,5-dihydroxy-2,3-pentadione (DPD). This Vibrio alginolyticus protein is S-ribosylhomocysteine lyase.